The sequence spans 225 residues: Pre-mRNA-splicing factor SPF27 (225 aa).

Ala-2 bears the N-acetylalanine mark. Ser-94 is modified (phosphoserine). The stretch at 138-222 (YNENLVHMIE…HGEANKENIR (85 aa)) forms a coiled coil.

It belongs to the SPF27 family. In terms of assembly, component of the pre-catalytic and catalytic spliceosome complexes. Component of the postcatalytic spliceosome P complex. Component of the PRP19-CDC5L splicing complex composed of a core complex comprising a homotetramer of PRPF19, CDC5L, PLRG1 and BCAS2, and at least three less stably associated proteins CTNNBL1, CWC15 and HSPA8. Interacts directly in the complex with PRPF19, CDC5L and PLRG1. In terms of tissue distribution, ubiquitously expressed.

It localises to the nucleus. The protein localises to the nucleolus. Functionally, required for pre-mRNA splicing as component of the activated spliceosome. Component of the PRP19-CDC5L complex that forms an integral part of the spliceosome and is required for activating pre-mRNA splicing. May have a scaffolding role in the spliceosome assembly as it contacts all other components of the core complex. The PRP19-CDC5L complex may also play a role in the response to DNA damage (DDR). In Homo sapiens (Human), this protein is Pre-mRNA-splicing factor SPF27 (BCAS2).